The chain runs to 216 residues: ATP-dependent dethiobiotin synthetase BioD (216 aa).

12-17 (NVGKTF) is an ATP binding site. Threonine 16 provides a ligand contact to Mg(2+). The active site involves lysine 36. Serine 40 is a substrate binding site. Residues aspartate 53, 110-113 (EGAG), and 170-171 (NQ) each bind ATP. Aspartate 53 and glutamate 110 together coordinate Mg(2+).

Belongs to the dethiobiotin synthetase family. Homodimer. Requires Mg(2+) as cofactor.

It is found in the cytoplasm. It catalyses the reaction (7R,8S)-7,8-diammoniononanoate + CO2 + ATP = (4R,5S)-dethiobiotin + ADP + phosphate + 3 H(+). It participates in cofactor biosynthesis; biotin biosynthesis; biotin from 7,8-diaminononanoate: step 1/2. Its function is as follows. Catalyzes a mechanistically unusual reaction, the ATP-dependent insertion of CO2 between the N7 and N8 nitrogen atoms of 7,8-diaminopelargonic acid (DAPA, also called 7,8-diammoniononanoate) to form a ureido ring. The protein is ATP-dependent dethiobiotin synthetase BioD of Vesicomyosocius okutanii subsp. Calyptogena okutanii (strain HA).